The chain runs to 462 residues: BBSome complex member bbs-4 (462 aa).

The disordered stretch occupies residues 1-46 (MEASNQDEIIGTDVIPNEQDNPEEVVPEPTSLDVPPPPPERAPSAP). TPR repeat units lie at residues 89-122 (EAAF…SGKN), 124-156 (RYFY…MKDN), 199-232 (ATLI…QPDN), 234-266 (EVMN…DPAN), 268-300 (QAIL…SDYN), 335-368 (YKIS…YPQN), and 369-402 (AKAV…KKNP).

It belongs to the BBS4 family. In terms of assembly, part of BBSome complex, that contains at least bbs-1, bbs-2, bbs-4, bbs-5, osm-12, bbs-8/ttc-8 and bbs-9. Interacts (via C-terminus) with bbs-5; the interaction is direct.

The protein resides in the cytoplasm. It is found in the cytoskeleton. It localises to the microtubule organizing center. Its subcellular location is the centrosome. The protein localises to the cell projection. The protein resides in the cilium membrane. Its function is as follows. Component of the BBSome complex. The BBSome complex is thought to function as a coat complex required for sorting of specific membrane proteins to the primary cilia. The BBSome complex is required for ciliogenesis but is dispensable for centriolar satellite function. Required for proper BBSome complex assembly and its ciliary localization. May be required for microtubule anchoring at the centrosome but not for microtubule nucleation. May be required for the dynein-mediated transport of pericentriolar proteins to the centrosome. Required, redundantly with bbs-5, for cilia biogenesis and both the assembly and movement of intraflagellar transport proteins along the ciliary axoneme. Plays a role in the removal of degraded mechanosensory receptors within the cilia. The chain is BBSome complex member bbs-4 from Caenorhabditis elegans.